The chain runs to 123 residues: NADH-quinone oxidoreductase subunit A (123 aa).

Transmembrane regions (helical) follow at residues 6–26 (LTPY…AMLI), 66–86 (VVAL…PWAV), and 93–113 (WFGY…LIYI).

It belongs to the complex I subunit 3 family. As to quaternary structure, NDH-1 is composed of 14 different subunits. Subunits NuoA, H, J, K, L, M, N constitute the membrane sector of the complex.

It is found in the cell inner membrane. The catalysed reaction is a quinone + NADH + 5 H(+)(in) = a quinol + NAD(+) + 4 H(+)(out). Functionally, NDH-1 shuttles electrons from NADH, via FMN and iron-sulfur (Fe-S) centers, to quinones in the respiratory chain. The immediate electron acceptor for the enzyme in this species is believed to be ubiquinone. Couples the redox reaction to proton translocation (for every two electrons transferred, four hydrogen ions are translocated across the cytoplasmic membrane), and thus conserves the redox energy in a proton gradient. This Myxococcus xanthus (strain DK1622) protein is NADH-quinone oxidoreductase subunit A.